We begin with the raw amino-acid sequence, 624 residues long: (-)-beta-phellandrene synthase 4, chloroplastic (624 aa).

A chloroplast-targeting transit peptide spans 1–48; sequence MAIVSSVPLASKSCLHKSLISSIHKLKPFCRTIPTLGMSRPGKSVMPS. The disordered stretch occupies residues 41–60; that stretch reads PGKSVMPSMSMSSPVSDDGV. Positions 44 to 56 are enriched in low complexity; that stretch reads SVMPSMSMSSPVS. The Mg(2+) site is built by aspartate 375, aspartate 379, and aspartate 527. A DDXXD motif motif is present at residues 375–379; the sequence is DDMYD.

This sequence belongs to the terpene synthase family. Tpsd subfamily. It depends on Mg(2+) as a cofactor. Mn(2+) serves as cofactor.

The protein resides in the plastid. It is found in the chloroplast. The catalysed reaction is (2E)-geranyl diphosphate = (-)-beta-phellandrene + diphosphate. It functions in the pathway terpene metabolism; oleoresin biosynthesis. In terms of biological role, terpene synthase (TPS) involved in the biosynthesis of monoterpene natural products included in conifer oleoresin secretions and volatile emissions; these compounds contribute to biotic and abiotic stress defense against herbivores and pathogens. Catalyzes the conversion of (2E)-geranyl diphosphate (GPP) to (-)-beta-phellandrene. This chain is (-)-beta-phellandrene synthase 4, chloroplastic, found in Picea sitchensis (Sitka spruce).